The sequence spans 341 residues: L-threonine 3-dehydrogenase (341 aa).

C38 provides a ligand contact to Zn(2+). Residues T40 and H43 each act as charge relay system in the active site. Zn(2+)-binding residues include H63, E64, C93, C96, C99, and C107. NAD(+) is bound by residues I175, D195, R200, 262 to 264 (LGI), and 286 to 287 (IY).

Belongs to the zinc-containing alcohol dehydrogenase family. In terms of assembly, homotetramer. Zn(2+) is required as a cofactor.

It is found in the cytoplasm. It carries out the reaction L-threonine + NAD(+) = (2S)-2-amino-3-oxobutanoate + NADH + H(+). It functions in the pathway amino-acid degradation; L-threonine degradation via oxydo-reductase pathway; glycine from L-threonine: step 1/2. Functionally, catalyzes the NAD(+)-dependent oxidation of L-threonine to 2-amino-3-ketobutyrate. The sequence is that of L-threonine 3-dehydrogenase from Salmonella arizonae (strain ATCC BAA-731 / CDC346-86 / RSK2980).